The sequence spans 103 residues: Histone H4 (103 aa).

Residues 1 to 14 show a composition bias toward gly residues; that stretch reads MSGRGKGGKGLGKG. The disordered stretch occupies residues 1-20; that stretch reads MSGRGKGGKGLGKGGAKRHR. The DNA-binding element occupies 17–21; sequence KRHRK.

Belongs to the histone H4 family. In terms of assembly, the nucleosome is a histone octamer containing two molecules each of H2A, H2B, H3 and H4 assembled in one H3-H4 heterotetramer and two H2A-H2B heterodimers. The octamer wraps approximately 147 bp of DNA.

Its subcellular location is the nucleus. It is found in the chromosome. In terms of biological role, core component of nucleosome. Nucleosomes wrap and compact DNA into chromatin, limiting DNA accessibility to the cellular machineries which require DNA as a template. Histones thereby play a central role in transcription regulation, DNA repair, DNA replication and chromosomal stability. DNA accessibility is regulated via a complex set of post-translational modifications of histones, also called histone code, and nucleosome remodeling. The sequence is that of Histone H4 (H4-I) from Chlamydomonas reinhardtii (Chlamydomonas smithii).